The primary structure comprises 618 residues: Cell pattern formation-associated protein STU1 (618 aa).

The span at Met13–Asn28 shows a compositional bias: polar residues. Positions Met13–Pro105 are disordered. A compositionally biased stretch (low complexity) spans Tyr48–Ser59. Residues Asn91–Gln101 show a composition bias toward polar residues. In terms of domain architecture, HTH APSES-type spans Arg110 to Pro216. The segment at residues Gly144–Glu165 is a DNA-binding region (H-T-H motif). 2 disordered regions span residues Ala229–Ser355 and Ser390–Arg618. Polar residues-rich tracts occupy residues Met256–Gly266, Thr284–Phe298, Ala305–Met326, and Gly336–Ser355. Basic and acidic residues predominate over residues Asp438–Thr451. Residues Tyr452–Val476 show a composition bias toward polar residues. A compositionally biased stretch (low complexity) spans Pro494–Pro512. The segment covering Arg513–Ala563 has biased composition (polar residues). Residues Lys566 to Lys588 are nuclear localization domain.

Belongs to the EFG1/PHD1/stuA family.

Its subcellular location is the nucleus. Its function is as follows. Transcription factor that regulates asexual reproduction. Binds the StuA-response elements (StRE) with the consensus sequence 5'-(A/T)CGCG(T/A)N(A/C)-3' at the promoters of target genes. Required for appressorium-mediated infection of rice leaves due to its involvement in the mobilization of lipids and glycogen. The chain is Cell pattern formation-associated protein STU1 from Pyricularia oryzae (strain 70-15 / ATCC MYA-4617 / FGSC 8958) (Rice blast fungus).